A 419-amino-acid chain; its full sequence is UDP-N-acetylglucosamine 1-carboxyvinyltransferase 2 (419 aa).

24–25 (KN) contacts phosphoenolpyruvate. A UDP-N-acetyl-alpha-D-glucosamine-binding site is contributed by arginine 94. The Proton donor role is filled by cysteine 118. Cysteine 118 carries the post-translational modification 2-(S-cysteinyl)pyruvic acid O-phosphothioketal. Residues 123 to 127 (RPIDQ), aspartate 307, and isoleucine 329 each bind UDP-N-acetyl-alpha-D-glucosamine.

The protein belongs to the EPSP synthase family. MurA subfamily.

The protein resides in the cytoplasm. The catalysed reaction is phosphoenolpyruvate + UDP-N-acetyl-alpha-D-glucosamine = UDP-N-acetyl-3-O-(1-carboxyvinyl)-alpha-D-glucosamine + phosphate. It functions in the pathway cell wall biogenesis; peptidoglycan biosynthesis. Its function is as follows. Cell wall formation. Adds enolpyruvyl to UDP-N-acetylglucosamine. This Staphylococcus epidermidis (strain ATCC 12228 / FDA PCI 1200) protein is UDP-N-acetylglucosamine 1-carboxyvinyltransferase 2.